Consider the following 435-residue polypeptide: Ribulose bisphosphate carboxylase-like protein (435 aa).

Positions 198, 200, and 201 each coordinate Mg(2+). Lysine 198 is subject to N6-carboxylysine.

The protein belongs to the RuBisCO large chain family. Type IV subfamily. As to quaternary structure, homodimer. Mg(2+) is required as a cofactor.

May be involved in sulfur metabolism and oxidative stress response. Does not show RuBisCO activity. The chain is Ribulose bisphosphate carboxylase-like protein from Chlorobaculum tepidum (strain ATCC 49652 / DSM 12025 / NBRC 103806 / TLS) (Chlorobium tepidum).